The following is a 204-amino-acid chain: uncharacterized protein (204 aa).

The signal sequence occupies residues 1–24; it reads MPINTFCKISLFICALFCSTVTLA.

This is an uncharacterized protein from Pasteurella multocida (strain Pm70).